Here is a 53-residue protein sequence, read N- to C-terminus: Large ribosomal subunit protein bL32 (53 aa).

A compositionally biased stretch (basic residues) spans 1-20 (MAVPKRRVSHTRAAKRRTHY). Positions 1 to 53 (MAVPKRRVSHTRAAKRRTHYKLTLPMPVKDADGTWRMPHHMNMTTGEYKTTKA) are disordered. Residues 42–53 (NMTTGEYKTTKA) are compositionally biased toward polar residues.

The protein belongs to the bacterial ribosomal protein bL32 family.

The sequence is that of Large ribosomal subunit protein bL32 from Sulfurovum sp. (strain NBC37-1).